Here is a 685-residue protein sequence, read N- to C-terminus: tRNA 5-methylaminomethyl-2-thiouridine biosynthesis bifunctional protein MnmC (685 aa).

Residues 1–272 (MTAEPNKPCQ…MAAILSSATQ (272 aa)) are tRNA (mnm(5)s(2)U34)-methyltransferase. Residues 278 to 685 (IGGGLASAHL…LRKLLKGKAL (408 aa)) are FAD-dependent cmnm(5)s(2)U34 oxidoreductase.

The protein in the N-terminal section; belongs to the methyltransferase superfamily. tRNA (mnm(5)s(2)U34)-methyltransferase family. This sequence in the C-terminal section; belongs to the DAO family. Requires FAD as cofactor.

Its subcellular location is the cytoplasm. It catalyses the reaction 5-aminomethyl-2-thiouridine(34) in tRNA + S-adenosyl-L-methionine = 5-methylaminomethyl-2-thiouridine(34) in tRNA + S-adenosyl-L-homocysteine + H(+). Catalyzes the last two steps in the biosynthesis of 5-methylaminomethyl-2-thiouridine (mnm(5)s(2)U) at the wobble position (U34) in tRNA. Catalyzes the FAD-dependent demodification of cmnm(5)s(2)U34 to nm(5)s(2)U34, followed by the transfer of a methyl group from S-adenosyl-L-methionine to nm(5)s(2)U34, to form mnm(5)s(2)U34. The sequence is that of tRNA 5-methylaminomethyl-2-thiouridine biosynthesis bifunctional protein MnmC from Shewanella baltica (strain OS185).